Here is an 872-residue protein sequence, read N- to C-terminus: MKELSSAQIRQMWLDFWKSKGHCVEPSANLVPVNDPTLLWINSGVATLKKYFDGSVIPENPRITNAQKSIRTNDIENVGKTARHHTMFEMLGNFSIGDYFRDEAIEWGFELLTSPDWFDFPKDKLYMTYYPDDKDSYNRWIACGVEPSHLVPIEDNFWEIGAGPSGPDTEIFFDRGEDFDPENIGLRLLAEDIENDRYIEIWNIVLSQFNADPAVPRSEYKELPNKNIDTGAGLERLAAVMQGAKTNFETDLFMPIIREVEKLSGKTYDPDGDNMSFKVIADHIRALSFAIGDGALPGNEGRGYVLRRLLRRAVMHGRRLGINETFLYKLVPTVGQIMESYYPEVLEKRDFIEKIVKREEETFARTIDAGSGHLDSLLAQLKAEGKDTLEGKDIFKLYDTYGFPVELTEELAEDAGYKIDHEGFKSAMKEQQDRARAAVVKGGSMGMQNETLAGIVEESRFEYDTYSLESSLSVIIADNERTEAVSEGQALLVFAQTPFYAEMGGQVADTGRIKNDKGDTVAEVVDVQKAPNGQPLHTVNVLASLSVGTNYTLEINKERRLAVEKNHTATHLLHAALHNVIGEHATQAGSLNEEEFLRFDFTHFEAVSNEELRHIEQEVNEQIWNALTITTTETDVETAKEMGAMALFGEKYGKVVRVVQIGNYSVELCGGTHLNNSSEIGLFKIVKEEGIGSGTRRIIAVTGRQAFEAYRNQEDALKEIAATVKAPQLKDAAAKVQALSDSLRDLQKENAELKEKAAAAAAGDVFKDVQEAKGVRFIASQVDVADAGALRTFADNWKQKDYSDVLVLVAAIGEKVNVLVASKTKDVHAGNMIKELAPIVAGRGGGKPDMAMAGGSDASKIAELLAAVAEIV.

Zn(2+)-binding residues include histidine 567, histidine 571, cysteine 669, and histidine 673.

This sequence belongs to the class-II aminoacyl-tRNA synthetase family. Requires Zn(2+) as cofactor.

The protein resides in the cytoplasm. The enzyme catalyses tRNA(Ala) + L-alanine + ATP = L-alanyl-tRNA(Ala) + AMP + diphosphate. Functionally, catalyzes the attachment of alanine to tRNA(Ala) in a two-step reaction: alanine is first activated by ATP to form Ala-AMP and then transferred to the acceptor end of tRNA(Ala). Also edits incorrectly charged Ser-tRNA(Ala) and Gly-tRNA(Ala) via its editing domain. In Streptococcus pyogenes serotype M1, this protein is Alanine--tRNA ligase.